Reading from the N-terminus, the 148-residue chain is MESPRNHGGSEEEEYSSCESGWTMYIEDAFHGNDQSSVVVDDDDDDTQVKEADDGYENDDGDTSDDGGDEESDDSMASDASSGPSNQLPKHINKHAARKNGSKQVYLQKRQHTEKTISNEGEKSDLKARTRTSAASRVQSRGKVSKTK.

The span at 1-10 (MESPRNHGGS) shows a compositional bias: basic and acidic residues. Disordered regions lie at residues 1–20 (MESP…SCES) and 33–148 (NDQS…SKTK). The short motif at 20-25 (SGWTMY) is the SOFL-A element. The segment covering 54-76 (DGYENDDGDTSDDGGDEESDDSM) has biased composition (acidic residues). The SOFL-B motif lies at 75–84 (SMASDASSGP). Basic residues predominate over residues 91-101 (HINKHAARKNG). The span at 111–128 (QHTEKTISNEGEKSDLKA) shows a compositional bias: basic and acidic residues.

The protein belongs to the SOFL plant protein family. As to expression, predominantly expressed in the vascular tissues of seedlings, developing leaves, flowers and siliques, but barely detectable in roots and stems.

It is found in the cytoplasm. It localises to the nucleus. In terms of biological role, involved in cytokinin-mediated development. Together with SOFL2, triggers the endogenous content of specific bioactive cytokinins derived from the biosynthetic intermediates trans-zeatin riboside monophosphate (tZRMP) and N(6)-(Delta(2)-isopentenyl)adenosine monophosphate (iPRMP) such as N-glucosides trans-zeatin 7-glucoside (tZ7G), cis-zeatin 7-glucoside (cZ7G) and N(6)-(Delta(2)-isopentenyl)adenine 7-glucoside (iP7G). This chain is Protein SOB FIVE-LIKE 1, found in Arabidopsis thaliana (Mouse-ear cress).